Here is a 421-residue protein sequence, read N- to C-terminus: UDP-N-acetylglucosamine 1-carboxyvinyltransferase (421 aa).

Residue 22-23 (KN) coordinates phosphoenolpyruvate. UDP-N-acetyl-alpha-D-glucosamine is bound at residue Arg93. Residue Cys117 is the Proton donor of the active site. Cys117 is subject to 2-(S-cysteinyl)pyruvic acid O-phosphothioketal. UDP-N-acetyl-alpha-D-glucosamine is bound by residues 122 to 126 (RPVDQ), Asp309, and Ile331.

It belongs to the EPSP synthase family. MurA subfamily.

Its subcellular location is the cytoplasm. The catalysed reaction is phosphoenolpyruvate + UDP-N-acetyl-alpha-D-glucosamine = UDP-N-acetyl-3-O-(1-carboxyvinyl)-alpha-D-glucosamine + phosphate. It participates in cell wall biogenesis; peptidoglycan biosynthesis. Its function is as follows. Cell wall formation. Adds enolpyruvyl to UDP-N-acetylglucosamine. In Albidiferax ferrireducens (strain ATCC BAA-621 / DSM 15236 / T118) (Rhodoferax ferrireducens), this protein is UDP-N-acetylglucosamine 1-carboxyvinyltransferase.